The following is a 306-amino-acid chain: Putative B3 domain-containing protein Os03g0621600 (306 aa).

Positions 29-122 (FSVLCLMPIM…QLKTLIFDSS (94 aa)) form a DNA-binding region, TF-B3 1. Residues 139 to 166 (YDIAMRNSQDEKKKRKQRDISRQGTVKP) form a disordered region. Positions 210-306 (GYVMNNSSIH…VMDVHIIRRK (97 aa)) form a DNA-binding region, TF-B3 2.

Its subcellular location is the nucleus. The protein is Putative B3 domain-containing protein Os03g0621600 of Oryza sativa subsp. japonica (Rice).